A 610-amino-acid polypeptide reads, in one-letter code: Glutamine--fructose-6-phosphate aminotransferase [isomerizing] (610 aa).

Cys2 functions as the Nucleophile; for GATase activity in the catalytic mechanism. The Glutamine amidotransferase type-2 domain occupies 2–219; that stretch reads CGIVGATSER…EGDVADINRT (218 aa). SIS domains lie at 287–427 and 459–600; these read AADI…YRGM and LAQD…VDQP. Catalysis depends on Lys605, which acts as the For Fru-6P isomerization activity.

Homodimer.

Its subcellular location is the cytoplasm. The enzyme catalyses D-fructose 6-phosphate + L-glutamine = D-glucosamine 6-phosphate + L-glutamate. Functionally, catalyzes the first step in hexosamine metabolism, converting fructose-6P into glucosamine-6P using glutamine as a nitrogen source. This Idiomarina loihiensis (strain ATCC BAA-735 / DSM 15497 / L2-TR) protein is Glutamine--fructose-6-phosphate aminotransferase [isomerizing].